A 214-amino-acid polypeptide reads, in one-letter code: Vascular endothelial growth factor A (214 aa).

An N-terminal signal peptide occupies residues 1–26 (MNFLLSWVHWSLALLLYLHHAKWSQA). 3 disulfide bridges follow: C51/C93, C82/C127, and C86/C129. N-linked (GlcNAc...) asparagine glycosylation occurs at N100. Residues 131–142 (PKKDRARQEKKS) show a composition bias toward basic and acidic residues. Residues 131–162 (PKKDRARQEKKSIRGKGKGQKRKRKKSRYKPW) form a disordered region. Positions 143-159 (IRGKGKGQKRKRKKSRY) are enriched in basic residues.

It belongs to the PDGF/VEGF growth factor family. As to quaternary structure, homodimer; disulfide-linked. Also found as heterodimer with PGF. Interacts with NRP1. Interacts with BSG. Interacts with CD82; this interaction inhibits VEGFA-mediated signaling pathway.

Its subcellular location is the secreted. Growth factor active in angiogenesis, vasculogenesis and endothelial cell growth. Induces endothelial cell proliferation, promotes cell migration, inhibits apoptosis and induces permeabilization of blood vessels. Binds to the FLT1/VEGFR1 and KDR/VEGFR2 receptors, heparan sulfate and heparin. Binding to NRP1 receptor initiates a signaling pathway needed for motor neuron axon guidance and cell body migration, including for the caudal migration of facial motor neurons from rhombomere 4 to rhombomere 6 during embryonic development. Also binds the DEAR/FBXW7-AS1 receptor. In Canis lupus familiaris (Dog), this protein is Vascular endothelial growth factor A (VEGFA).